The sequence spans 381 residues: GDP-mannose transporter (381 aa).

Residues 1–44 (MAEGKKTDDYTIQMDSIDQGNKSFEAPPPPQPRSPPSGSLSNNP) lie on the Cytoplasmic side of the membrane. The disordered stretch occupies residues 19–41 (QGNKSFEAPPPPQPRSPPSGSLS). Positions 26–35 (APPPPQPRSP) are enriched in pro residues. The helical transmembrane segment at 45-65 (ILPVLAYCGSSILMTVMNKYV) threads the bilayer. At 66 to 70 (LSGTD) the chain is on the lumenal side. Residues 71-91 (FNLNFFLLCIQSLVCIIAIQT) traverse the membrane as a helical segment. The Cytoplasmic segment spans residues 92 to 109 (CKSCGLITYRDFSADEAR). Residues 110 to 126 (KWFPITLLLIGMIYTGS) traverse the membrane as a helical segment. The Lumenal portion of the chain corresponds to 127-133 (KALQFLS). The chain crosses the membrane as a helical span at residues 134–150 (IPVYTIFKNLTIILIAY). At 151–159 (GEVLWFGGS) the chain is on the cytoplasmic side. Residues 160-181 (VTGLTLFSFGLMVLSSIIAAWA) form a helical membrane-spanning segment. The Lumenal portion of the chain corresponds to 182 to 199 (DIKHAVESNGDATAKVST). The chain crosses the membrane as a helical span at residues 200–220 (LNAGYIWMLVNCLCTSSYVLG). The Cytoplasmic segment spans residues 221–234 (MRKRIKLTNFKDFD). A helical membrane pass occupies residues 235–255 (TMFYNNLLSIPVLIVLSAFLE). The Lumenal segment spans residues 256–273 (DWSSTNVNRNFPPMDRNS). Residues 274–294 (IVFAMILSGLSSVFISYTSAW) form a helical membrane-spanning segment. The Cytoplasmic segment spans residues 295–302 (CVRVTSST). The helical transmembrane segment at 303–323 (TYSMVGALNKLPIAISGLIFF) threads the bilayer. Topologically, residues 324–326 (DAP) are lumenal. Residues 327–347 (VTFPSVSAIVVGFVSGIVYAV) form a helical membrane-spanning segment. The Cytoplasmic portion of the chain corresponds to 348-381 (AKIKQNAKPRTGVLPTANPPVSASSQSMRDSLRS). A disordered region spans residues 358–381 (TGVLPTANPPVSASSQSMRDSLRS). A compositionally biased stretch (polar residues) spans 366–381 (PPVSASSQSMRDSLRS).

This sequence belongs to the TPT transporter family. SLC35D subfamily. In terms of assembly, homooligomer.

The protein localises to the golgi apparatus membrane. It is found in the cytoplasmic vesicle membrane. Its subcellular location is the endoplasmic reticulum membrane. Involved in the import of GDP-mannose from the cytoplasm into the Golgi lumen. This chain is GDP-mannose transporter (gmt1), found in Aspergillus niger (strain ATCC MYA-4892 / CBS 513.88 / FGSC A1513).